Reading from the N-terminus, the 338-residue chain is Glycerol-3-phosphate dehydrogenase [NAD(P)+] (338 aa).

Positions 13, 14, and 108 each coordinate NADPH. Sn-glycerol 3-phosphate is bound by residues Lys108, Gly139, and Ser141. Residue Ala143 participates in NADPH binding. Sn-glycerol 3-phosphate is bound by residues Lys194, Asp247, Ser257, Arg258, and Asn259. Lys194 (proton acceptor) is an active-site residue. Arg258 is a binding site for NADPH. NADPH is bound by residues Val282 and Glu284.

This sequence belongs to the NAD-dependent glycerol-3-phosphate dehydrogenase family.

Its subcellular location is the cytoplasm. The catalysed reaction is sn-glycerol 3-phosphate + NAD(+) = dihydroxyacetone phosphate + NADH + H(+). The enzyme catalyses sn-glycerol 3-phosphate + NADP(+) = dihydroxyacetone phosphate + NADPH + H(+). It participates in membrane lipid metabolism; glycerophospholipid metabolism. Its function is as follows. Catalyzes the reduction of the glycolytic intermediate dihydroxyacetone phosphate (DHAP) to sn-glycerol 3-phosphate (G3P), the key precursor for phospholipid synthesis. The chain is Glycerol-3-phosphate dehydrogenase [NAD(P)+] from Streptococcus pyogenes serotype M12 (strain MGAS9429).